Here is a 971-residue protein sequence, read N- to C-terminus: Exportin-2 (971 aa).

Met-1 bears the N-acetylmethionine mark. In terms of domain architecture, Importin N-terminal spans 29–102 (AEKFLESVEG…KANIVHLMLS (74 aa)). Residue Ser-112 is modified to Phosphoserine. N6-acetyllysine occurs at positions 574 and 824. Residue Ser-931 is modified to Phosphoserine.

It belongs to the XPO2/CSE1 family. Found in a complex with CSE1L/XPO2, Ran and KPNA2. Binds with high affinity to importin-alpha only in the presence of RanGTP. The complex is dissociated by the combined action of RanBP1 and RanGAP1. Interacts with CFTR.

The protein resides in the cytoplasm. It is found in the nucleus. Functionally, export receptor for importin-alpha. Mediates importin-alpha re-export from the nucleus to the cytoplasm after import substrates (cargos) have been released into the nucleoplasm. In the nucleus binds cooperatively to importin-alpha and to the GTPase Ran in its active GTP-bound form. Docking of this trimeric complex to the nuclear pore complex (NPC) is mediated through binding to nucleoporins. Upon transit of a nuclear export complex into the cytoplasm, disassembling of the complex and hydrolysis of Ran-GTP to Ran-GDP (induced by RANBP1 and RANGAP1, respectively) cause release of the importin-alpha from the export receptor. CSE1L/XPO2 then return to the nuclear compartment and mediate another round of transport. The directionality of nuclear export is thought to be conferred by an asymmetric distribution of the GTP- and GDP-bound forms of Ran between the cytoplasm and nucleus. This chain is Exportin-2 (CSE1L), found in Pongo abelii (Sumatran orangutan).